A 101-amino-acid polypeptide reads, in one-letter code: NAD(P)H-quinone oxidoreductase subunit 4L, chloroplastic (101 aa).

3 helical membrane passes run 2–22 (MLEH…YGLI), 32–52 (MCLE…SDLF), and 61–81 (IFSI…LAII).

It belongs to the complex I subunit 4L family. NDH is composed of at least 16 different subunits, 5 of which are encoded in the nucleus.

Its subcellular location is the plastid. The protein localises to the chloroplast thylakoid membrane. The catalysed reaction is a plastoquinone + NADH + (n+1) H(+)(in) = a plastoquinol + NAD(+) + n H(+)(out). It carries out the reaction a plastoquinone + NADPH + (n+1) H(+)(in) = a plastoquinol + NADP(+) + n H(+)(out). Functionally, NDH shuttles electrons from NAD(P)H:plastoquinone, via FMN and iron-sulfur (Fe-S) centers, to quinones in the photosynthetic chain and possibly in a chloroplast respiratory chain. The immediate electron acceptor for the enzyme in this species is believed to be plastoquinone. Couples the redox reaction to proton translocation, and thus conserves the redox energy in a proton gradient. This Ranunculus macranthus (Large buttercup) protein is NAD(P)H-quinone oxidoreductase subunit 4L, chloroplastic.